Consider the following 162-residue polypeptide: General odorant-binding protein 2 (162 aa).

A signal peptide spans 1 to 18 (MTSKSCLLLVAMVTLTTS). Cystine bridges form between Cys40–Cys75, Cys71–Cys129, and Cys118–Cys138.

The protein belongs to the PBP/GOBP family. As to expression, antenna.

Its function is as follows. Present in the aqueous fluid surrounding olfactory sensory dendrites and are thought to aid in the capture and transport of hydrophobic odorants into and through this fluid. This Heliothis virescens (Tobacco budworm moth) protein is General odorant-binding protein 2.